Here is a 146-residue protein sequence, read N- to C-terminus: Phospho-2-dehydro-3-deoxyheptonate aldolase (146 aa).

Belongs to the class-II DAHP synthase family. In terms of assembly, homodimer.

The catalysed reaction is D-erythrose 4-phosphate + phosphoenolpyruvate + H2O = 7-phospho-2-dehydro-3-deoxy-D-arabino-heptonate + phosphate. It functions in the pathway metabolic intermediate biosynthesis; chorismate biosynthesis; chorismate from D-erythrose 4-phosphate and phosphoenolpyruvate: step 1/7. The sequence is that of Phospho-2-dehydro-3-deoxyheptonate aldolase from Streptomyces lividans.